The chain runs to 383 residues: S-adenosylmethionine synthase (383 aa).

His-15 is a binding site for ATP. Position 17 (Asp-17) interacts with Mg(2+). Glu-43 lines the K(+) pocket. Residues Glu-56 and Gln-99 each coordinate L-methionine. Positions 99 to 109 are flexible loop; the sequence is QSPDINQGVDR. ATP-binding positions include 164–166, 230–231, Asp-239, 245–246, Ala-262, and Lys-266; these read DAK, RF, and RK. An L-methionine-binding site is contributed by Asp-239. Lys-270 provides a ligand contact to L-methionine.

This sequence belongs to the AdoMet synthase family. Homotetramer; dimer of dimers. The cofactor is Mg(2+). It depends on K(+) as a cofactor.

It localises to the cytoplasm. The enzyme catalyses L-methionine + ATP + H2O = S-adenosyl-L-methionine + phosphate + diphosphate. It functions in the pathway amino-acid biosynthesis; S-adenosyl-L-methionine biosynthesis; S-adenosyl-L-methionine from L-methionine: step 1/1. Its function is as follows. Catalyzes the formation of S-adenosylmethionine (AdoMet) from methionine and ATP. The overall synthetic reaction is composed of two sequential steps, AdoMet formation and the subsequent tripolyphosphate hydrolysis which occurs prior to release of AdoMet from the enzyme. The polypeptide is S-adenosylmethionine synthase (Pectobacterium atrosepticum (strain SCRI 1043 / ATCC BAA-672) (Erwinia carotovora subsp. atroseptica)).